The primary structure comprises 250 residues: Ribosomal RNA small subunit methyltransferase G (250 aa).

S-adenosyl-L-methionine contacts are provided by residues Gly78, Leu83, 129–130, and Arg144; that span reads AE. Residues 224–250 are disordered; it reads IAAPRKRGGQQRRAGHARGTSNRRRGT. Basic residues predominate over residues 227–250; it reads PRKRGGQQRRAGHARGTSNRRRGT.

It belongs to the methyltransferase superfamily. RNA methyltransferase RsmG family.

Its subcellular location is the cytoplasm. Functionally, specifically methylates the N7 position of guanine in position 518 of 16S rRNA. This is Ribosomal RNA small subunit methyltransferase G from Nocardioides sp. (strain ATCC BAA-499 / JS614).